The chain runs to 345 residues: Phosphoribosylformylglycinamidine cyclo-ligase (345 aa).

This sequence belongs to the AIR synthase family.

It is found in the cytoplasm. The enzyme catalyses 2-formamido-N(1)-(5-O-phospho-beta-D-ribosyl)acetamidine + ATP = 5-amino-1-(5-phospho-beta-D-ribosyl)imidazole + ADP + phosphate + H(+). The protein operates within purine metabolism; IMP biosynthesis via de novo pathway; 5-amino-1-(5-phospho-D-ribosyl)imidazole from N(2)-formyl-N(1)-(5-phospho-D-ribosyl)glycinamide: step 2/2. The polypeptide is Phosphoribosylformylglycinamidine cyclo-ligase (Escherichia fergusonii (strain ATCC 35469 / DSM 13698 / CCUG 18766 / IAM 14443 / JCM 21226 / LMG 7866 / NBRC 102419 / NCTC 12128 / CDC 0568-73)).